A 612-amino-acid polypeptide reads, in one-letter code: UvrABC system protein C (612 aa).

A GIY-YIG domain is found at 21–99 (HQPGVYRMYD…IKKYRPRYNV (79 aa)). The 36-residue stretch at 208–243 (QQVIDELMNKMEQASTDLDFERAARFRDQIAALRKT) folds into the UVR domain.

The protein belongs to the UvrC family. As to quaternary structure, interacts with UvrB in an incision complex.

It is found in the cytoplasm. Its function is as follows. The UvrABC repair system catalyzes the recognition and processing of DNA lesions. UvrC both incises the 5' and 3' sides of the lesion. The N-terminal half is responsible for the 3' incision and the C-terminal half is responsible for the 5' incision. The sequence is that of UvrABC system protein C from Idiomarina loihiensis (strain ATCC BAA-735 / DSM 15497 / L2-TR).